A 319-amino-acid chain; its full sequence is Aliphatic sulfonates import ATP-binding protein SsuB 1 (319 aa).

The ABC transporter domain occupies 63–282; the sequence is VTLSGVSKRF…ARASAAFAAL (220 aa). 95–102 serves as a coordination point for ATP; that stretch reads GRSGCGKS.

The protein belongs to the ABC transporter superfamily. Aliphatic sulfonates importer (TC 3.A.1.17.2) family. The complex is composed of two ATP-binding proteins (SsuB), two transmembrane proteins (SsuC) and a solute-binding protein (SsuA).

The protein localises to the cell inner membrane. It catalyses the reaction ATP + H2O + aliphatic sulfonate-[sulfonate-binding protein]Side 1 = ADP + phosphate + aliphatic sulfonateSide 2 + [sulfonate-binding protein]Side 1.. Functionally, part of the ABC transporter complex SsuABC involved in aliphatic sulfonates import. Responsible for energy coupling to the transport system. This is Aliphatic sulfonates import ATP-binding protein SsuB 1 from Burkholderia cenocepacia (strain HI2424).